Consider the following 530-residue polypeptide: White collar 2 protein (530 aa).

7 repeat units span residues 9–12 (GSSM), 21–24 (GSGM), 25–28 (GSGM), 29–32 (GSGM), 33–36 (GTGM), 37–40 (GTGM), and 41–44 (GTGM). The segment at 9–44 (GSSMYGFGAMGMGSGMGSGMGSGMGTGMGTGMGTGM) is 7 X 4 AA repeats of G-[SAT]-G-M. Residues 134 to 158 (IATPTTTTSGPSGGPSSGGGSTLTE) form a disordered region. The segment covering 144–154 (PSGGPSSGGGS) has biased composition (gly residues). The PAS domain maps to 162-232 (RRNWPAKVVE…AELNEAIATG (71 aa)). The tract at residues 315–343 (REEQEEQEESHRTWRMSQEGRSDVTPSDD) is disordered. The GATA-type zinc-finger motif lies at 468–493 (CTDCGTLDSPEWRKGPSGPKTLCNAC). Residues 504–530 (KNANNNNNGGGIGGHNDIHTPMGDHMG) are disordered.

In terms of assembly, heterodimer of wc-1 and wc-2 (Potential). Binds to DNA.

It localises to the nucleus. Functionally, may function as a transcription factor involved in light regulation. Binds and affects blue light regulation of the al-3 gene. Wc-1 and wc-2 interact via homologous PAS domains, bind to promoters of light regulated genes such as frq, and activate transcription. May bind directly to frq. In Neurospora crassa (strain ATCC 24698 / 74-OR23-1A / CBS 708.71 / DSM 1257 / FGSC 987), this protein is White collar 2 protein (wc-2).